Here is a 356-residue protein sequence, read N- to C-terminus: uncharacterized protein (356 aa).

It localises to the cytoplasm. It is found in the nucleus. This is an uncharacterized protein from Saccharomyces cerevisiae (strain ATCC 204508 / S288c) (Baker's yeast).